A 228-amino-acid chain; its full sequence is Mediator of RNA polymerase II transcription subunit 7-A (228 aa).

It belongs to the Mediator complex subunit 7 family. In terms of assembly, component of the Mediator complex.

The protein localises to the nucleus. In terms of biological role, component of the Mediator complex, a coactivator involved in the regulated transcription of nearly all RNA polymerase II-dependent genes. Mediator functions as a bridge to convey information from gene-specific regulatory proteins to the basal RNA polymerase II transcription machinery. Mediator is recruited to promoters by direct interactions with regulatory proteins and serves as a scaffold for the assembly of a functional preinitiation complex with RNA polymerase II and the general transcription factors. This chain is Mediator of RNA polymerase II transcription subunit 7-A (med7-a), found in Xenopus laevis (African clawed frog).